The following is a 304-amino-acid chain: Uricase (304 aa).

Alanine 2 bears the N-acetylalanine mark. N6-acetyllysine; alternate is present on residues lysine 10 and lysine 23. Lysine 10 and lysine 23 each carry N6-succinyllysine; alternate. Lysine 23 acts as the Charge relay system in catalysis. 2 positions are modified to N6-acetyllysine: lysine 27 and lysine 36. Phosphoserine is present on residues serine 39 and serine 63. The active-site Charge relay system is threonine 68. 2 residues coordinate urate: threonine 68 and aspartate 69. N6-acetyllysine is present on residues lysine 118, lysine 122, and lysine 164. Phenylalanine 170 serves as a coordination point for urate. N6-acetyllysine is present on residues lysine 175 and lysine 185. Urate is bound at residue arginine 187. N6-acetyllysine; alternate occurs at positions 221 and 228. 2 positions are modified to N6-succinyllysine; alternate: lysine 221 and lysine 228. Phosphoserine is present on serine 232. Positions 235, 236, and 262 each coordinate urate. Histidine 264 functions as the Charge relay system in the catalytic mechanism. Lysine 278 bears the N6-acetyllysine mark. Tyrosine 289 is subject to Phosphotyrosine. Residues 302 to 304 carry the Microbody targeting signal motif; that stretch reads SRL.

The protein belongs to the uricase family. In terms of assembly, homotetramer.

Its subcellular location is the peroxisome. It catalyses the reaction urate + O2 + H2O = 5-hydroxyisourate + H2O2. It functions in the pathway purine metabolism; urate degradation; (S)-allantoin from urate: step 1/3. Catalyzes the oxidation of uric acid to 5-hydroxyisourate, which is further processed to form (S)-allantoin. This is Uricase (UOX) from Bos taurus (Bovine).